A 218-amino-acid polypeptide reads, in one-letter code: ATP-dependent Clp protease proteolytic subunit 2 (218 aa).

The protein belongs to the peptidase S14 family. In terms of assembly, fourteen ClpP subunits assemble into 2 heptameric rings which stack back to back to give a disk-like structure with a central cavity, resembling the structure of eukaryotic proteasomes.

It is found in the cytoplasm. It carries out the reaction Hydrolysis of proteins to small peptides in the presence of ATP and magnesium. alpha-casein is the usual test substrate. In the absence of ATP, only oligopeptides shorter than five residues are hydrolyzed (such as succinyl-Leu-Tyr-|-NHMec, and Leu-Tyr-Leu-|-Tyr-Trp, in which cleavage of the -Tyr-|-Leu- and -Tyr-|-Trp bonds also occurs).. Functionally, cleaves peptides in various proteins in a process that requires ATP hydrolysis. Has a chymotrypsin-like activity. Plays a major role in the degradation of misfolded proteins. The polypeptide is ATP-dependent Clp protease proteolytic subunit 2 (Gloeobacter violaceus (strain ATCC 29082 / PCC 7421)).